The primary structure comprises 845 residues: Proto-oncogene vav (845 aa).

A Calponin-homology (CH) domain is found at 1–119; that stretch reads MELWRQCTHW…YTLSALSWTP (119 aa). The DH domain maps to 194–373; it reads KRCCCLREIQ…RDLAQCVNEV (180 aa). Residues 402 to 504 form the PH domain; it reads RPKIDGELKI…WMEQFEMAIS (103 aa). A Phorbol-ester/DAG-type zinc finger spans residues 515–564; that stretch reads GHDFQMFSFEETTSCKACQMLLRGTFYQGYRCHRCRASAHKECLGRVPPC. One can recognise an SH3 1 domain in the interval 592-660; that stretch reads LGLPKMEVFQ…PCNRVKPYVH (69 aa). The SH2 domain occupies 671–765; the sequence is WYAGPMERAG…SLDTTLQFPF (95 aa). The region spanning 782-842 is the SH3 2 domain; that stretch reads KYFGTAKARY…PANYVEEDYS (61 aa). Residues Tyr826 and Tyr844 each carry the phosphotyrosine modification.

Interacts with SHB. Interacts with SH2B2, GRB2, GRB3, DOCK2, SLA, TEC and ZNF655/VIK. Interacts with SIAH2; without leading to its degradation. Associates with BLNK, PLCG1, GRB2 and NCK1 in a B-cell antigen receptor-dependent fashion. Interacts with CBLB; which inhibits tyrosine phosphorylation and down-regulates activity. May interact with CCPG1. Interacts with CLNK. Interacts with THEMIS2. Interacts with NEK3 and this interaction is prolactin-dependent. Interacts with ITK. Interacts with PTK2B/PYK2. Interacts with HCK. Interacts with PTK2B/PYK2. Interacts (via SH2 domain) with SYK. Interacts with ANKRD54. Interacts with CD6. Interacts with isoform 2 of CRACR2A. Interacts with LCP2; this interaction plays a role in TCR-mediated cytokine production. In terms of processing, phosphorylated on tyrosine residues by HCK in response to IFNG and bacterial lipopolysaccharide (LPS). Phosphorylated by FYN. As to expression, widely expressed in hematopoietic cells but not in other cell types.

In terms of biological role, couples tyrosine kinase signals with the activation of the Rho/Rac GTPases, thus leading to cell differentiation and/or proliferation. The protein is Proto-oncogene vav (VAV1) of Homo sapiens (Human).